A 473-amino-acid polypeptide reads, in one-letter code: 3-isopropylmalate dehydratase large subunit (473 aa).

Cysteine 351, cysteine 414, and cysteine 417 together coordinate [4Fe-4S] cluster.

The protein belongs to the aconitase/IPM isomerase family. LeuC type 1 subfamily. As to quaternary structure, heterodimer of LeuC and LeuD. [4Fe-4S] cluster is required as a cofactor.

It carries out the reaction (2R,3S)-3-isopropylmalate = (2S)-2-isopropylmalate. The protein operates within amino-acid biosynthesis; L-leucine biosynthesis; L-leucine from 3-methyl-2-oxobutanoate: step 2/4. Its function is as follows. Catalyzes the isomerization between 2-isopropylmalate and 3-isopropylmalate, via the formation of 2-isopropylmaleate. In Acidovorax sp. (strain JS42), this protein is 3-isopropylmalate dehydratase large subunit.